The following is a 1351-amino-acid chain: DNA-directed RNA polymerase subunit beta' (1351 aa).

Zn(2+) is bound by residues cysteine 70, cysteine 72, cysteine 85, and cysteine 88. Mg(2+) is bound by residues aspartate 460, aspartate 462, and aspartate 464. Zn(2+) contacts are provided by cysteine 801, cysteine 875, cysteine 882, and cysteine 885.

It belongs to the RNA polymerase beta' chain family. As to quaternary structure, the RNAP catalytic core consists of 2 alpha, 1 beta, 1 beta' and 1 omega subunit. When a sigma factor is associated with the core the holoenzyme is formed, which can initiate transcription. Mg(2+) is required as a cofactor. Requires Zn(2+) as cofactor.

The enzyme catalyses RNA(n) + a ribonucleoside 5'-triphosphate = RNA(n+1) + diphosphate. Functionally, DNA-dependent RNA polymerase catalyzes the transcription of DNA into RNA using the four ribonucleoside triphosphates as substrates. This is DNA-directed RNA polymerase subunit beta' from Syntrophobacter fumaroxidans (strain DSM 10017 / MPOB).